The following is a 333-amino-acid chain: Tetraacyldisaccharide 4'-kinase (333 aa).

Residue 57-64 (IVGGAGKT) coordinates ATP.

This sequence belongs to the LpxK family.

It carries out the reaction a lipid A disaccharide + ATP = a lipid IVA + ADP + H(+). It functions in the pathway glycolipid biosynthesis; lipid IV(A) biosynthesis; lipid IV(A) from (3R)-3-hydroxytetradecanoyl-[acyl-carrier-protein] and UDP-N-acetyl-alpha-D-glucosamine: step 6/6. Transfers the gamma-phosphate of ATP to the 4'-position of a tetraacyldisaccharide 1-phosphate intermediate (termed DS-1-P) to form tetraacyldisaccharide 1,4'-bis-phosphate (lipid IVA). In Dechloromonas aromatica (strain RCB), this protein is Tetraacyldisaccharide 4'-kinase.